The chain runs to 607 residues: Transporter aclS (607 aa).

The next 12 membrane-spanning stretches (helical) occupy residues 67 to 87, 91 to 111, 152 to 172, 192 to 212, 221 to 241, 262 to 282, 317 to 337, 364 to 384, 423 to 443, 445 to 465, 500 to 520, and 531 to 551; these read LGGS…AVVL, IAAI…IGFP, LTVV…TAIL, VTTQ…PVLY, LMIG…IWSL, SLGF…SIAL, VFGQ…FGCL, AAAV…NVVD, GCYV…LASA, TFVS…GIHI, GVLP…HSIN, and HLYA…HTLV. A disordered region spans residues 583 to 607; the sequence is NKDSTEEDSDRSLRRESREVVETKV. The span at 592–607 shows a compositional bias: basic and acidic residues; that stretch reads DRSLRRESREVVETKV.

This sequence belongs to the purine-cytosine permease (2.A.39) family.

It is found in the membrane. In terms of biological role, transporter; part of the gene cluster that mediates the biosynthesis of aspirochlorine (or antibiotic A30641), an unusual halogenated spiro compound with distinctive antifungal properties due to selective inhibition of protein biosynthesis, and which is also active against bacteria, viruses, and murine tumor cells. This Aspergillus oryzae (strain ATCC 42149 / RIB 40) (Yellow koji mold) protein is Transporter aclS.